The primary structure comprises 447 residues: Argininosuccinate synthase (447 aa).

ATP contacts are provided by residues 17–25 (AFSGGLDTS) and Ala-43. Tyr-99 is an L-citrulline binding site. ATP contacts are provided by Gly-129 and Thr-131. L-aspartate contacts are provided by Thr-131, Asn-135, and Asp-136. Position 135 (Asn-135) interacts with L-citrulline. Asp-136 contributes to the ATP binding site. Positions 139 and 192 each coordinate L-citrulline. Position 194 (Asp-194) interacts with ATP. L-citrulline-binding residues include Thr-201, Glu-203, and Glu-280.

It belongs to the argininosuccinate synthase family. Type 2 subfamily. Homotetramer.

The protein resides in the cytoplasm. It carries out the reaction L-citrulline + L-aspartate + ATP = 2-(N(omega)-L-arginino)succinate + AMP + diphosphate + H(+). It participates in amino-acid biosynthesis; L-arginine biosynthesis; L-arginine from L-ornithine and carbamoyl phosphate: step 2/3. This Klebsiella pneumoniae (strain 342) protein is Argininosuccinate synthase.